The primary structure comprises 291 residues: Protease HtpX homolog (291 aa).

The next 2 helical transmembrane spans lie at 4-24 (IALF…TASL) and 38-58 (LGAL…ISLL). His-144 is a binding site for Zn(2+). Residue Glu-145 is part of the active site. His-148 is a Zn(2+) binding site. Transmembrane regions (helical) follow at residues 159-179 (LIQG…GYFI) and 197-217 (VTTV…VAWF). Glu-222 lines the Zn(2+) pocket.

This sequence belongs to the peptidase M48B family. It depends on Zn(2+) as a cofactor.

Its subcellular location is the cell inner membrane. This Leptothrix cholodnii (strain ATCC 51168 / LMG 8142 / SP-6) (Leptothrix discophora (strain SP-6)) protein is Protease HtpX homolog.